A 141-amino-acid polypeptide reads, in one-letter code: Large ribosomal subunit protein uL11 (141 aa).

Belongs to the universal ribosomal protein uL11 family. Part of the ribosomal stalk of the 50S ribosomal subunit. Interacts with L10 and the large rRNA to form the base of the stalk. L10 forms an elongated spine to which L12 dimers bind in a sequential fashion forming a multimeric L10(L12)X complex. In terms of processing, one or more lysine residues are methylated.

Forms part of the ribosomal stalk which helps the ribosome interact with GTP-bound translation factors. The sequence is that of Large ribosomal subunit protein uL11 from Leptospira biflexa serovar Patoc (strain Patoc 1 / Ames).